The primary structure comprises 364 residues: 4-hydroxy-3-methylbut-2-en-1-yl diphosphate synthase (flavodoxin) (364 aa).

[4Fe-4S] cluster-binding residues include Cys-268, Cys-271, Cys-303, and Glu-310.

This sequence belongs to the IspG family. It depends on [4Fe-4S] cluster as a cofactor.

It catalyses the reaction (2E)-4-hydroxy-3-methylbut-2-enyl diphosphate + oxidized [flavodoxin] + H2O + 2 H(+) = 2-C-methyl-D-erythritol 2,4-cyclic diphosphate + reduced [flavodoxin]. It participates in isoprenoid biosynthesis; isopentenyl diphosphate biosynthesis via DXP pathway; isopentenyl diphosphate from 1-deoxy-D-xylulose 5-phosphate: step 5/6. Its function is as follows. Converts 2C-methyl-D-erythritol 2,4-cyclodiphosphate (ME-2,4cPP) into 1-hydroxy-2-methyl-2-(E)-butenyl 4-diphosphate. This chain is 4-hydroxy-3-methylbut-2-en-1-yl diphosphate synthase (flavodoxin), found in Anoxybacillus flavithermus (strain DSM 21510 / WK1).